Reading from the N-terminus, the 523-residue chain is Cytoplasmic dynein 1 light intermediate chain 1 (523 aa).

The segment at 1 to 25 is disordered; it reads MAAVGRVGSFGSSPPGLASTYASGP. ATP is bound at residue 74–81; it reads GEDGAGKT. Disordered stretches follow at residues 200 to 219, 387 to 434, and 457 to 523; these read PGED…QEDR, PPTA…DPNM, and GSPG…GEAS. Serine 207 is subject to Phosphoserine. A Phosphothreonine modification is found at threonine 213. Serine 398 and serine 405 each carry phosphoserine. At threonine 408 the chain carries Phosphothreonine. Residues serine 412, serine 419, serine 421, and serine 427 each carry the phosphoserine modification. Residues 412–421 are compositionally biased toward low complexity; that stretch reads SVSSNVASVS. A compositionally biased stretch (gly residues) spans 458–473; that stretch reads SPGGPGVGGSPGGGAA. The span at 474–485 shows a compositional bias: low complexity; that stretch reads GASPSLPPSAKK. Phosphoserine occurs at positions 486 and 510. Low complexity predominate over residues 506 to 523; it reads PASVSPTTPTSPTEGEAS. Residues threonine 512, threonine 513, and threonine 515 each carry the phosphothreonine modification. Residue serine 516 is modified to Phosphoserine.

Belongs to the dynein light intermediate chain family. In terms of assembly, homodimer. The cytoplasmic dynein 1 complex consists of two catalytic heavy chains (HCs) and a number of non-catalytic subunits presented by intermediate chains (ICs), light intermediate chains (LICs) and light chains (LCs); the composition seems to vary in respect to the IC, LIC and LC composition. The heavy chain homodimer serves as a scaffold for the probable homodimeric assembly of the respective non-catalytic subunits. The ICs and LICs bind directly to the HC dimer and the LCs assemble on the IC dimer. Self-associates. Interacts with DYNC1H1; DYNC1LI1 and DYNC1LI2 bind mutually exclusive to DYNC1H1. Interacts with PCNT. Forms a complex with RAB11FIP3 and RAB11A1; the interaction between DYNC1LI1 and RAB11FIP3 is direct and induces DYNC1LI1 localization onto endosomal membrane; the complex regulates endocytic trafficking. Interacts with RUFY3. In terms of processing, phosphorylated during mitosis but not in interphase.

Its subcellular location is the cytoplasm. The protein localises to the chromosome. It localises to the centromere. The protein resides in the kinetochore. It is found in the cytoskeleton. Its subcellular location is the spindle pole. The protein localises to the recycling endosome membrane. Its function is as follows. Acts as one of several non-catalytic accessory components of the cytoplasmic dynein 1 complex that are thought to be involved in linking dynein to cargos and to adapter proteins that regulate dynein function. Cytoplasmic dynein 1 acts as a motor for the intracellular retrograde motility of vesicles and organelles along microtubules. May play a role in binding dynein to membranous organelles or chromosomes. Probably involved in the microtubule-dependent transport of pericentrin. Is required for progress through the spindle assembly checkpoint. The phosphorylated form appears to be involved in the selective removal of MAD1L1 and MAD1L2 but not BUB1B from kinetochores. Forms a functional Rab11/RAB11FIP3/dynein complex onto endosomal membrane that regulates the movement of peripheral sorting endosomes (SE) along microtubule tracks toward the microtubule organizing center/centrosome, generating the endosomal recycling compartment (ERC). In Mus musculus (Mouse), this protein is Cytoplasmic dynein 1 light intermediate chain 1 (Dync1li1).